The following is a 144-amino-acid chain: D-aminoacyl-tRNA deacylase (144 aa).

The short motif at 136–137 (GP) is the Gly-cisPro motif, important for rejection of L-amino acids element.

It belongs to the DTD family. As to quaternary structure, homodimer.

Its subcellular location is the cytoplasm. It catalyses the reaction glycyl-tRNA(Ala) + H2O = tRNA(Ala) + glycine + H(+). It carries out the reaction a D-aminoacyl-tRNA + H2O = a tRNA + a D-alpha-amino acid + H(+). In terms of biological role, an aminoacyl-tRNA editing enzyme that deacylates mischarged D-aminoacyl-tRNAs. Also deacylates mischarged glycyl-tRNA(Ala), protecting cells against glycine mischarging by AlaRS. Acts via tRNA-based rather than protein-based catalysis; rejects L-amino acids rather than detecting D-amino acids in the active site. By recycling D-aminoacyl-tRNA to D-amino acids and free tRNA molecules, this enzyme counteracts the toxicity associated with the formation of D-aminoacyl-tRNA entities in vivo and helps enforce protein L-homochirality. This is D-aminoacyl-tRNA deacylase from Mannheimia succiniciproducens (strain KCTC 0769BP / MBEL55E).